Here is a 402-residue protein sequence, read N- to C-terminus: Bacillibactin exporter (402 aa).

The next 11 helical transmembrane spans lie at 4 to 24, 39 to 59, 69 to 89, 104 to 124, 162 to 182, 212 to 232, 247 to 267, 278 to 298, 302 to 322, 342 to 362, and 368 to 388; these read IIAL…LIPV, VSLI…IAGY, ILLP…FAST, LQGI…GDLF, FVPF…VLFL, WLYT…GVLF, VAKG…SFIA, MKFC…ALWW, FYFL…ALPA, FYNS…AALM, and IIFI…LFTV.

The protein belongs to the major facilitator superfamily.

Its subcellular location is the cell membrane. Involved in secretion of bacillibactin. In Bacillus subtilis (strain 168), this protein is Bacillibactin exporter (ymfD).